The chain runs to 405 residues: Pyruvate decarboxylase 2 (405 aa).

The interval 232-314 (DSWFNCQKLK…FLINNGGYTI (83 aa)) is thiamine pyrophosphate binding. Asp282, Asn309, and Gly311 together coordinate Mg(2+). Residue Glu315 participates in substrate binding.

The protein belongs to the TPP enzyme family. As to quaternary structure, homotetramer. A metal cation serves as cofactor. Thiamine diphosphate is required as a cofactor.

The catalysed reaction is a 2-oxocarboxylate + H(+) = an aldehyde + CO2. This is Pyruvate decarboxylase 2 (PDC2) from Pisum sativum (Garden pea).